The primary structure comprises 338 residues: Anthranilate phosphoribosyltransferase (338 aa).

5-phospho-alpha-D-ribose 1-diphosphate is bound by residues Gly-81, Gly-84–Asp-85, Thr-89, Asn-91–Thr-94, Lys-109–Ser-117, and Ala-121. Residue Gly-81 participates in anthranilate binding. Ser-93 is a binding site for Mg(2+). Asn-112 is a binding site for anthranilate. Arg-167 contributes to the anthranilate binding site. Mg(2+)-binding residues include Asp-226 and Glu-227.

Belongs to the anthranilate phosphoribosyltransferase family. In terms of assembly, homodimer. Mg(2+) serves as cofactor.

It carries out the reaction N-(5-phospho-beta-D-ribosyl)anthranilate + diphosphate = 5-phospho-alpha-D-ribose 1-diphosphate + anthranilate. Its pathway is amino-acid biosynthesis; L-tryptophan biosynthesis; L-tryptophan from chorismate: step 2/5. In terms of biological role, catalyzes the transfer of the phosphoribosyl group of 5-phosphorylribose-1-pyrophosphate (PRPP) to anthranilate to yield N-(5'-phosphoribosyl)-anthranilate (PRA). This Cereibacter sphaeroides (strain ATCC 17029 / ATH 2.4.9) (Rhodobacter sphaeroides) protein is Anthranilate phosphoribosyltransferase.